A 282-amino-acid chain; its full sequence is Ribosomal RNA small subunit methyltransferase A (282 aa).

S-adenosyl-L-methionine contacts are provided by Asn28, Leu30, Gly55, Glu77, Asp103, and Asn122.

It belongs to the class I-like SAM-binding methyltransferase superfamily. rRNA adenine N(6)-methyltransferase family. RsmA subfamily.

Its subcellular location is the cytoplasm. It carries out the reaction adenosine(1518)/adenosine(1519) in 16S rRNA + 4 S-adenosyl-L-methionine = N(6)-dimethyladenosine(1518)/N(6)-dimethyladenosine(1519) in 16S rRNA + 4 S-adenosyl-L-homocysteine + 4 H(+). Functionally, specifically dimethylates two adjacent adenosines (A1518 and A1519) in the loop of a conserved hairpin near the 3'-end of 16S rRNA in the 30S particle. May play a critical role in biogenesis of 30S subunits. This is Ribosomal RNA small subunit methyltransferase A from Paracoccus denitrificans (strain Pd 1222).